The chain runs to 62 residues: Photosystem II reaction center protein Z (62 aa).

2 helical membrane-spanning segments follow: residues 8-28 (AVFA…VVFA) and 41-61 (FSGT…NSLI).

This sequence belongs to the PsbZ family. As to quaternary structure, PSII is composed of 1 copy each of membrane proteins PsbA, PsbB, PsbC, PsbD, PsbE, PsbF, PsbH, PsbI, PsbJ, PsbK, PsbL, PsbM, PsbT, PsbY, PsbZ, Psb30/Ycf12, at least 3 peripheral proteins of the oxygen-evolving complex and a large number of cofactors. It forms dimeric complexes.

It is found in the plastid. It localises to the chloroplast thylakoid membrane. Functionally, may control the interaction of photosystem II (PSII) cores with the light-harvesting antenna, regulates electron flow through the 2 photosystem reaction centers. PSII is a light-driven water plastoquinone oxidoreductase, using light energy to abstract electrons from H(2)O, generating a proton gradient subsequently used for ATP formation. In Daucus carota (Wild carrot), this protein is Photosystem II reaction center protein Z.